The sequence spans 452 residues: Protein MLF3 (452 aa).

A phosphoserine mark is found at Ser-8, Ser-11, Ser-14, Ser-56, Ser-74, and Ser-79. The disordered stretch occupies residues 61 to 94; it reads SGSEVRTPSLRKNSNNVSSPLDNVIPTSRSASNS. The span at 64–81 shows a compositional bias: polar residues; sequence EVRTPSLRKNSNNVSSPL. Phosphothreonine is present on Thr-121. Ser-145, Ser-156, and Ser-160 each carry phosphoserine. Thr-169 carries the post-translational modification Phosphothreonine. The residue at position 171 (Ser-171) is a Phosphoserine. The segment covering 171–182 has biased composition (polar residues); that stretch reads SATLPSSESSPA. Residues 171–220 are disordered; the sequence is SATLPSSESSPASPDLKLSRSHSHSAATRPTLNNINNTGMTTTTSNGEPN. Thr-173 is modified (phosphothreonine). 2 positions are modified to phosphoserine: Ser-183 and Ser-189. Over residues 201–216 the composition is skewed to low complexity; it reads TLNNINNTGMTTTTSN. Tyr-227 carries the post-translational modification Phosphotyrosine. Phosphoserine occurs at positions 228, 257, and 265. Disordered stretches follow at residues 290 to 321 and 348 to 402; these read PATSPYVSPQQSARQYSNNANNNAKSPKNRSS and IESS…AIGK. Tyr-295 carries the post-translational modification Phosphotyrosine. Residues Ser-297, Ser-320, and Ser-353 each carry the phosphoserine modification. The span at 299-321 shows a compositional bias: low complexity; it reads QQSARQYSNNANNNAKSPKNRSS. Low complexity predominate over residues 365–383; sequence PSFPLSSSLRSSANLASNP. Positions 384-398 are enriched in polar residues; sequence ELATQTPLSTSSSYT. Residue Ser-439 is modified to Phosphoserine.

The protein to yeast VHS2.

The protein localises to the cytoplasm. The protein is Protein MLF3 (MLF3) of Saccharomyces cerevisiae (strain ATCC 204508 / S288c) (Baker's yeast).